A 280-amino-acid chain; its full sequence is Ribosomal protein L11 methyltransferase (280 aa).

S-adenosyl-L-methionine is bound by residues threonine 130, glycine 151, aspartate 172, and asparagine 213.

Belongs to the methyltransferase superfamily. PrmA family.

The protein resides in the cytoplasm. The enzyme catalyses L-lysyl-[protein] + 3 S-adenosyl-L-methionine = N(6),N(6),N(6)-trimethyl-L-lysyl-[protein] + 3 S-adenosyl-L-homocysteine + 3 H(+). Its function is as follows. Methylates ribosomal protein L11. The polypeptide is Ribosomal protein L11 methyltransferase (Nitratiruptor sp. (strain SB155-2)).